The sequence spans 260 residues: UPF0246 protein APJL_0596 (260 aa).

The protein belongs to the UPF0246 family.

The sequence is that of UPF0246 protein APJL_0596 from Actinobacillus pleuropneumoniae serotype 3 (strain JL03).